Reading from the N-terminus, the 21-residue chain is Serine protease inhibitor 3 (21 aa).

This sequence belongs to the protease inhibitor I3 (leguminous Kunitz-type inhibitor) family. Tubers.

Its subcellular location is the vacuole. Inhibits trypsin and chymotrypsin (serine proteases). Does not inhibit elastase, subtilisin, cathepsin L nor papain (serine and cysteine proteases). Protects the plant by inhibiting proteases of invading organisms, decreasing both hyphal growth and zoospores germination of Phytophthora infestans. The polypeptide is Serine protease inhibitor 3 (Solanum tuberosum (Potato)).